We begin with the raw amino-acid sequence, 339 residues long: Protein-lysine N-methyltransferase EFM3 (339 aa).

S-adenosyl-L-methionine contacts are provided by residues tryptophan 137 and 174–176; that span reads GAG. The residue at position 177 (threonine 177) is a Phosphothreonine. Residues aspartate 199, tryptophan 233, and alanine 248 each contribute to the S-adenosyl-L-methionine site.

It belongs to the class I-like SAM-binding methyltransferase superfamily. EEF2KMT family.

It is found in the cytoplasm. S-adenosyl-L-methionine-dependent protein-lysine N-methyltransferase that mono-, di- and trimethylates elongation factor 2 (EFT1/EFT2) at 'Lys-509'. The polypeptide is Protein-lysine N-methyltransferase EFM3 (Saccharomyces cerevisiae (strain ATCC 204508 / S288c) (Baker's yeast)).